We begin with the raw amino-acid sequence, 715 residues long: Protein naked cuticle homolog (715 aa).

The 36-residue stretch at 18 to 53 (KKPQPLQFSFTLYDLDGHGKITKDDIAGIVSTIYES) folds into the EF-hand domain. Residues 256–282 (SRAKRKVVRKSRSSRKASKLTDDFSRP) are disordered. The span at 257–273 (RAKRKVVRKSRSSRKAS) shows a compositional bias: basic residues. Residues 305–334 (ECWKSSLCRRELIEIIRDSMVKNSLCFQPN) form a required for nuclear localization and inhibition of Wnt signaling region. A disordered region spans residues 639 to 690 (ELHQSVQQQQGTHQQQQQPQSSVSSPTHHHHHHAGASLLGENSGSSASAAST). 2 stretches are compositionally biased toward low complexity: residues 642–664 (QSVQ…VSSP) and 673–690 (GASL…AAST).

Belongs to the NKD family.

It is found in the cell membrane. Its subcellular location is the cytoplasm. It localises to the nucleus. In terms of biological role, cell autonomous antagonist of the canonical Wnt signaling pathway. May activate a second Wnt signaling pathway that controls planar cell polarity. Required for neuroblast specification. In Aedes aegypti (Yellowfever mosquito), this protein is Protein naked cuticle homolog.